The sequence spans 432 residues: Putative D-alanyl-D-alanine carboxypeptidase (432 aa).

Residues 7-25 (ATVLLTFSLSAFAVEYPVL) traverse the membrane as a helical; Signal-anchor segment.

The protein belongs to the peptidase S12 family. YfeW subfamily.

The protein resides in the cell inner membrane. The catalysed reaction is Preferential cleavage: (Ac)2-L-Lys-D-Ala-|-D-Ala. Also transpeptidation of peptidyl-alanyl moieties that are N-acyl substituents of D-alanine.. This chain is Putative D-alanyl-D-alanine carboxypeptidase, found in Salmonella schwarzengrund (strain CVM19633).